A 106-amino-acid polypeptide reads, in one-letter code: Class II hydrophobin 6 (106 aa).

An N-terminal signal peptide occupies residues 1–16 (MQFFTVATLFLATAFA). Disulfide bonds link cysteine 36–cysteine 86, cysteine 47–cysteine 77, cysteine 48–cysteine 60, and cysteine 87–cysteine 98.

This sequence belongs to the cerato-ulmin hydrophobin family. Homodimer. Homodimers further self-assemble to form highly ordered films at water-air interfaces through intermolecular interactions.

It localises to the secreted. The protein resides in the cell wall. Functionally, aerial growth, conidiation, and dispersal of filamentous fungi in the environment rely upon a capability of their secreting small amphipathic proteins called hydrophobins (HPBs) with low sequence identity. Class I can self-assemble into an outermost layer of rodlet bundles on aerial cell surfaces, conferring cellular hydrophobicity that supports fungal growth, development and dispersal; whereas Class II form highly ordered films at water-air interfaces through intermolecular interactions but contribute nothing to the rodlet structure. HFB2-6 is a class II hydrophobin that has a function in root colonization. Acts as an effector in poplar by up-regulating the expression of genes related to both the jasmonic acid and salicylic acid signal transduction pathways, which not only causes induced systemic resistance (ISR), but also systemic acquired resistance (SAR), giving poplar broad-spectrum resistance to pathogens. Also induces genes related to auxin signal transduction to promote poplar growth. Plays roles in interactions with both biotic and abiotic environmental conditions such as the presence of the pathogen Alternaria alternata or nutrient starvation conditions. This is Class II hydrophobin 6 from Trichoderma asperellum (strain ATCC 204424 / CBS 433.97 / NBRC 101777).